Consider the following 616-residue polypeptide: 2-[(L-alanin-3-ylcarbamoyl)methyl]-3-(2-aminoethylcarbamoyl)-2-hydroxypropanoate synthase (616 aa).

This sequence belongs to the IucA/IucC family. Forms a mixture of monomer and dimer in solution.

The catalysed reaction is 2-[(2-aminoethylcarbamoyl)methyl]-2-hydroxybutanedioate + (S)-2,3-diaminopropanoate + ATP = 2-[(L-alanin-3-ylcarbamoyl)methyl]-3-(2-aminoethylcarbamoyl)-2-hydroxypropanoate + AMP + diphosphate. It functions in the pathway siderophore biosynthesis. In terms of biological role, catalyzes the condensation of L-2,3-diaminopropionic acid (L-Dap) and citryl-diaminoethane to form L-2,3-diaminopropionyl-citryl-diaminoethane, the third step in staphyloferrin B biosynthesis. The protein is 2-[(L-alanin-3-ylcarbamoyl)methyl]-3-(2-aminoethylcarbamoyl)-2-hydroxypropanoate synthase of Staphylococcus aureus (strain NCTC 8325 / PS 47).